The primary structure comprises 116 residues: Large ribosomal subunit protein bL19 (116 aa).

Belongs to the bacterial ribosomal protein bL19 family.

This protein is located at the 30S-50S ribosomal subunit interface and may play a role in the structure and function of the aminoacyl-tRNA binding site. The polypeptide is Large ribosomal subunit protein bL19 (Ectopseudomonas mendocina (strain ymp) (Pseudomonas mendocina)).